Consider the following 701-residue polypeptide: Glycine--tRNA ligase beta subunit (701 aa).

The protein belongs to the class-II aminoacyl-tRNA synthetase family. As to quaternary structure, tetramer of two alpha and two beta subunits.

The protein resides in the cytoplasm. It catalyses the reaction tRNA(Gly) + glycine + ATP = glycyl-tRNA(Gly) + AMP + diphosphate. This is Glycine--tRNA ligase beta subunit from Anaeromyxobacter dehalogenans (strain 2CP-C).